A 133-amino-acid polypeptide reads, in one-letter code: Small ribosomal subunit protein uS11 (133 aa).

It belongs to the universal ribosomal protein uS11 family. In terms of assembly, part of the 30S ribosomal subunit.

Functionally, located on the platform of the 30S subunit. The protein is Small ribosomal subunit protein uS11 of Aeropyrum pernix (strain ATCC 700893 / DSM 11879 / JCM 9820 / NBRC 100138 / K1).